The primary structure comprises 126 residues: uncharacterized protein (126 aa).

A run of 2 helical transmembrane segments spans residues 40-57 (IDKWILGALAFVFAVSFF) and 72-94 (ILIAIGIFATFEIAIILAVILGG).

The protein resides in the cell membrane. This is an uncharacterized protein from Pasteurella multocida (strain Pm70).